The following is a 181-amino-acid chain: Small ribosomal subunit protein uS4 (181 aa).

The S4 RNA-binding domain maps to 106-168; it reads RRLQTLVYRK…PTSRIVKAKV (63 aa).

It belongs to the universal ribosomal protein uS4 family. In terms of assembly, part of the 30S ribosomal subunit. Contacts protein S5. The interaction surface between S4 and S5 is involved in control of translational fidelity.

Its function is as follows. One of the primary rRNA binding proteins, it binds directly to 16S rRNA where it nucleates assembly of the body of the 30S subunit. With S5 and S12 plays an important role in translational accuracy. In Caldivirga maquilingensis (strain ATCC 700844 / DSM 13496 / JCM 10307 / IC-167), this protein is Small ribosomal subunit protein uS4.